The sequence spans 381 residues: Queuine tRNA-ribosyltransferase (381 aa).

Asp-89 (proton acceptor) is an active-site residue. Substrate is bound by residues 89–93, Asp-143, Gln-187, and Gly-214; that span reads DSGGF. Positions 245–251 are RNA binding; that stretch reads GVGKPED. Asp-264 acts as the Nucleophile in catalysis. The RNA binding; important for wobble base 34 recognition stretch occupies residues 269 to 273; sequence TRNAR. Cys-302, Cys-304, Cys-307, and His-333 together coordinate Zn(2+).

The protein belongs to the queuine tRNA-ribosyltransferase family. Homodimer. Within each dimer, one monomer is responsible for RNA recognition and catalysis, while the other monomer binds to the replacement base PreQ1. Zn(2+) is required as a cofactor.

It catalyses the reaction 7-aminomethyl-7-carbaguanine + guanosine(34) in tRNA = 7-aminomethyl-7-carbaguanosine(34) in tRNA + guanine. The protein operates within tRNA modification; tRNA-queuosine biosynthesis. Functionally, catalyzes the base-exchange of a guanine (G) residue with the queuine precursor 7-aminomethyl-7-deazaguanine (PreQ1) at position 34 (anticodon wobble position) in tRNAs with GU(N) anticodons (tRNA-Asp, -Asn, -His and -Tyr). Catalysis occurs through a double-displacement mechanism. The nucleophile active site attacks the C1' of nucleotide 34 to detach the guanine base from the RNA, forming a covalent enzyme-RNA intermediate. The proton acceptor active site deprotonates the incoming PreQ1, allowing a nucleophilic attack on the C1' of the ribose to form the product. After dissociation, two additional enzymatic reactions on the tRNA convert PreQ1 to queuine (Q), resulting in the hypermodified nucleoside queuosine (7-(((4,5-cis-dihydroxy-2-cyclopenten-1-yl)amino)methyl)-7-deazaguanosine). In Pectobacterium carotovorum subsp. carotovorum (strain PC1), this protein is Queuine tRNA-ribosyltransferase.